Here is a 323-residue protein sequence, read N- to C-terminus: tRNA U34 carboxymethyltransferase (323 aa).

Carboxy-S-adenosyl-L-methionine is bound by residues lysine 91, tryptophan 105, lysine 110, glycine 130, 180 to 181 (IE), methionine 196, tyrosine 200, and arginine 315.

It belongs to the class I-like SAM-binding methyltransferase superfamily. CmoB family. As to quaternary structure, homotetramer.

It catalyses the reaction carboxy-S-adenosyl-L-methionine + 5-hydroxyuridine(34) in tRNA = 5-carboxymethoxyuridine(34) in tRNA + S-adenosyl-L-homocysteine + H(+). In terms of biological role, catalyzes carboxymethyl transfer from carboxy-S-adenosyl-L-methionine (Cx-SAM) to 5-hydroxyuridine (ho5U) to form 5-carboxymethoxyuridine (cmo5U) at position 34 in tRNAs. In Citrifermentans bemidjiense (strain ATCC BAA-1014 / DSM 16622 / JCM 12645 / Bem) (Geobacter bemidjiensis), this protein is tRNA U34 carboxymethyltransferase.